We begin with the raw amino-acid sequence, 322 residues long: Protein IRREGULAR XYLEM 15 (322 aa).

The helical transmembrane segment at 28–48 (LWLLAFVSFFTIVFLLTLLYT) threads the bilayer.

Expressed in rosette leaves, stems and siliques. Expressed in the xylem.

Its subcellular location is the golgi apparatus membrane. In terms of biological role, required for xylan biosynthesis, but not directly involved in catalyzing the addition of sugars to the growing polymer. In Arabidopsis thaliana (Mouse-ear cress), this protein is Protein IRREGULAR XYLEM 15 (IRX15).